Consider the following 782-residue polypeptide: ATP-dependent 6-phosphofructokinase, muscle type (782 aa).

Threonine 2 bears the N-acetylthreonine mark. The segment at 2-390 is N-terminal catalytic PFK domain 1; sequence THEEHHAAKT…NWEVYKLLAH (389 aa). ATP contacts are provided by residues glycine 25, 88 to 89, and 118 to 121; these read RC and GDGS. Residue aspartate 119 participates in Mg(2+) binding. Position 133 is a phosphoserine (serine 133). Substrate-binding positions include 164–166, arginine 201, 208–210, glutamate 264, arginine 292, and 298–301; these read SID, MGR, and HVQR. Aspartate 166 functions as the Proton acceptor in the catalytic mechanism. Residue serine 377 is modified to Phosphoserine. The interdomain linker stretch occupies residues 391 to 403; that stretch reads IRPPVSKTSATMH. The C-terminal regulatory PFK domain 2 stretch occupies residues 404-782; the sequence is TVAVMNVGAP…SRKRSGETSI (379 aa). Beta-D-fructose 2,6-bisphosphate-binding positions include arginine 473 and 530–534; that span reads TVSNN. Serine 532 carries an O-linked (GlcNAc) serine glycan. Position 559 is an N6-(2-hydroxyisobutyryl)lysine (lysine 559). Residues arginine 568, 575–577, glutamate 631, arginine 657, and 663–666 each bind beta-D-fructose 2,6-bisphosphate; these read MGG and HMQQ. A Phosphoserine modification is found at serine 669. Arginine 737 is a binding site for beta-D-fructose 2,6-bisphosphate. Serine 777 carries the post-translational modification Phosphoserine.

Belongs to the phosphofructokinase type A (PFKA) family. ATP-dependent PFK group I subfamily. Eukaryotic two domain clade 'E' sub-subfamily. In terms of assembly, homo- and heterotetramers. Phosphofructokinase (PFK) enzyme functions as a tetramer composed of different combinations of 3 types of subunits, called PFKM (M), PFKL (L) and PFKP (P). The composition of the PFK tetramer differs according to the tissue type it is present in. The kinetic and regulatory properties of the tetrameric enzyme are dependent on the subunit composition, hence can vary across tissues. Interacts (via C-terminus) with HK1 (via N-terminal spermatogenic cell-specific region). Mg(2+) serves as cofactor. GlcNAcylation decreases enzyme activity.

It is found in the cytoplasm. It carries out the reaction beta-D-fructose 6-phosphate + ATP = beta-D-fructose 1,6-bisphosphate + ADP + H(+). It participates in carbohydrate degradation; glycolysis; D-glyceraldehyde 3-phosphate and glycerone phosphate from D-glucose: step 3/4. Its activity is regulated as follows. Allosterically activated by ADP, AMP, or fructose 2,6-bisphosphate, and allosterically inhibited by ATP or citrate. Functionally, catalyzes the phosphorylation of D-fructose 6-phosphate to fructose 1,6-bisphosphate by ATP, the first committing step of glycolysis. The chain is ATP-dependent 6-phosphofructokinase, muscle type (PFKM) from Canis lupus familiaris (Dog).